A 351-amino-acid polypeptide reads, in one-letter code: L-threonine 3-dehydrogenase (351 aa).

C42 serves as a coordination point for Zn(2+). Catalysis depends on charge relay system residues T44 and H47. 6 residues coordinate Zn(2+): H67, E68, C97, C100, C103, and C111. NAD(+)-binding positions include I179, D199, R204, 266–268 (LGL), and 291–292 (IT).

This sequence belongs to the zinc-containing alcohol dehydrogenase family. Homotetramer. It depends on Zn(2+) as a cofactor.

The protein resides in the cytoplasm. The catalysed reaction is L-threonine + NAD(+) = (2S)-2-amino-3-oxobutanoate + NADH + H(+). It participates in amino-acid degradation; L-threonine degradation via oxydo-reductase pathway; glycine from L-threonine: step 1/2. Functionally, catalyzes the NAD(+)-dependent oxidation of L-threonine to 2-amino-3-ketobutyrate. In Symbiobacterium thermophilum (strain DSM 24528 / JCM 14929 / IAM 14863 / T), this protein is L-threonine 3-dehydrogenase.